A 194-amino-acid chain; its full sequence is Fe/S biogenesis protein NfuA (194 aa).

2 residues coordinate [4Fe-4S] cluster: Cys152 and Cys155.

This sequence belongs to the NfuA family. In terms of assembly, homodimer. Requires [4Fe-4S] cluster as cofactor.

Its function is as follows. Involved in iron-sulfur cluster biogenesis. Binds a 4Fe-4S cluster, can transfer this cluster to apoproteins, and thereby intervenes in the maturation of Fe/S proteins. Could also act as a scaffold/chaperone for damaged Fe/S proteins. The sequence is that of Fe/S biogenesis protein NfuA from Teredinibacter turnerae (strain ATCC 39867 / T7901).